Consider the following 180-residue polypeptide: Centromere protein M (180 aa).

In terms of assembly, component of the CENPA-NAC complex, at least composed of CENPA, CENPC, CENPH, CENPM, CENPN, CENPT and CENPU. The CENPA-NAC complex interacts with the CENPA-CAD complex, composed of CENPI, CENPK, CENPL, CENPO, CENPP, CENPQ, CENPR and CENPS.

The protein localises to the nucleus. The protein resides in the cytoplasm. It localises to the chromosome. Its subcellular location is the centromere. It is found in the kinetochore. Functionally, component of the CENPA-NAC (nucleosome-associated) complex, a complex that plays a central role in assembly of kinetochore proteins, mitotic progression and chromosome segregation. The CENPA-NAC complex recruits the CENPA-CAD (nucleosome distal) complex and may be involved in incorporation of newly synthesized CENPA into centromeres. The chain is Centromere protein M (CENPM) from Bos taurus (Bovine).